The following is a 195-amino-acid chain: Thymidylate kinase (195 aa).

7–14 (GIDGVGKS) contributes to the ATP binding site.

The protein belongs to the thymidylate kinase family.

The catalysed reaction is dTMP + ATP = dTDP + ADP. Its function is as follows. Phosphorylation of dTMP to form dTDP in both de novo and salvage pathways of dTTP synthesis. The protein is Thymidylate kinase of Campylobacter hominis (strain ATCC BAA-381 / DSM 21671 / CCUG 45161 / LMG 19568 / NCTC 13146 / CH001A).